Consider the following 65-residue polypeptide: Alpha-toxin Bot1 (65 aa).

In terms of domain architecture, LCN-type CS-alpha/beta spans Arg-2–His-64. 4 disulfides stabilise this stretch: Cys-12-Cys-63, Cys-16-Cys-36, Cys-22-Cys-46, and Cys-26-Cys-48. Phe-65 carries the phenylalanine amide modification.

The protein belongs to the long (4 C-C) scorpion toxin superfamily. Sodium channel inhibitor family. Alpha subfamily. Expressed by the venom gland.

The protein resides in the secreted. Alpha toxins bind voltage-independently at site-3 of sodium channels (Nav) and inhibit the inactivation of the activated channels, thereby blocking neuronal transmission. This chain is Alpha-toxin Bot1, found in Buthus occitanus tunetanus (Common European scorpion).